We begin with the raw amino-acid sequence, 415 residues long: WD repeat-containing protein JIP5 (415 aa).

WD repeat units follow at residues 5–44, 104–142, 145–184, 189–228, and 233–282; these read DVGSQIFDVVFHPTFATVYTGLLNGHVKAFAYNEQGKEQA, AHDSTINRVKYLMPWLISTGDDDGVIKLWDPRQQECVRE, QHFDYITDFLWLDDKKQLVATSGDGTLSVMDVRSKKPEPF, DQDDELLSIVAIKGHSKIVVGTQLGILSIFNRSKGWGDCV, and GHPL…VVAD. The interval 328–415 is disordered; the sequence is GALGVTNENE…DVENAFFDEL (88 aa). Over residues 337–346 the composition is skewed to acidic residues; it reads EQSDEDEEMD. Residues 358–367 are compositionally biased toward low complexity; the sequence is DGSGSSSSGE. A compositionally biased stretch (basic and acidic residues) spans 390 to 405; the sequence is EQKPLDVDKPKGRNEI.

The protein belongs to the WD repeat WDR55 family.

Its subcellular location is the nucleus. The protein localises to the nucleolus. This chain is WD repeat-containing protein JIP5 (JIP5), found in Laccaria bicolor (strain S238N-H82 / ATCC MYA-4686) (Bicoloured deceiver).